The sequence spans 1465 residues: DNA polymerase III PolC-type (1465 aa).

Positions 427–583 constitute an Exonuclease domain; the sequence is YVVFDVETTG…YDAEATGRLL (157 aa).

The protein belongs to the DNA polymerase type-C family. PolC subfamily.

Its subcellular location is the cytoplasm. It carries out the reaction DNA(n) + a 2'-deoxyribonucleoside 5'-triphosphate = DNA(n+1) + diphosphate. In terms of biological role, required for replicative DNA synthesis. This DNA polymerase also exhibits 3' to 5' exonuclease activity. This chain is DNA polymerase III PolC-type, found in Streptococcus pyogenes serotype M2 (strain MGAS10270).